We begin with the raw amino-acid sequence, 175 residues long: Putative lipoprotein LppN (175 aa).

A signal peptide spans methionine 1–alanine 20. Cysteine 21 carries N-palmitoyl cysteine lipidation. The S-diacylglycerol cysteine moiety is linked to residue cysteine 21. The interval alanine 31 to glutamine 56 is disordered. Residues threonine 33–threonine 48 are compositionally biased toward low complexity. 3 prevents bacterial uptake by a human macrophage-like cell line regions span residues glutamate 61–leucine 80, arginine 101–alanine 120, and glycine 121–leucine 140.

It localises to the cell membrane. The protein localises to the cell surface. Functionally, probably involved in bacterial recognition and uptake by its host (human). In Mycobacterium tuberculosis (strain ATCC 25618 / H37Rv), this protein is Putative lipoprotein LppN (lppN).